We begin with the raw amino-acid sequence, 112 residues long: FK506-binding protein 1 (112 aa).

Over residues 1–10 (MSAPATTQVE) the composition is skewed to polar residues. A disordered region spans residues 1–20 (MSAPATTQVEILQEGDGKTF). The PPIase FKBP-type domain occupies 24-112 (GDLVTIHYTG…LFDVELLNVN (89 aa)).

Belongs to the FKBP-type PPIase family. FKBP1 subfamily.

Its subcellular location is the cytoplasm. The catalysed reaction is [protein]-peptidylproline (omega=180) = [protein]-peptidylproline (omega=0). Inhibited by both FK506 and rapamycin. PPIases accelerate the folding of proteins. It catalyzes the cis-trans isomerization of proline imidic peptide bonds in oligopeptides. The chain is FK506-binding protein 1 (FPR1) from Debaryomyces hansenii (strain ATCC 36239 / CBS 767 / BCRC 21394 / JCM 1990 / NBRC 0083 / IGC 2968) (Yeast).